Here is a 345-residue protein sequence, read N- to C-terminus: MSDTSEEKSHGATPKKLSDARKRGQIPRSSDFVRAAATCAGLGYLWLRGSVIEDKCREALLLTDKLQNLPFNLAVRQALVLLVELTLATVGPLLSALFGAVILAALLANRGFVFSLEPMKPNFDKINPFQWLKRLGSARSAVEVGKTLFKVLVLGGTFSLFFLGLWKTMVYLPVCGMGCFGVVFTGAKQLIGIGAGALLIGGLIDLLLQRALFLREMRMTKTEIKRELKEQQGTPELKGERRRIRNEMASEPPLGVHRATLVYRGTAVLIGLRYVRGETGVPILVCRAEGEAASDMFREAQNLRLKIVDDHVLAHQLMSTTKLGTAIPMQYFEPIARALLAAGLA.

Basic and acidic residues predominate over residues 1–22 (MSDTSEEKSHGATPKKLSDARK). The disordered stretch occupies residues 1-25 (MSDTSEEKSHGATPKKLSDARKRGQ). The next 3 helical transmembrane spans lie at 87–107 (LATVGPLLSALFGAVILAALL), 151–171 (VLVLGGTFSLFFLGLWKTMVY), and 189–209 (QLIGIGAGALLIGGLIDLLLQ).

This sequence belongs to the type III secretion exporter family.

It localises to the cell membrane. Functionally, could be involved in the secretion of an unknown factor. The polypeptide is Probable translocation protein y4yO (Sinorhizobium fredii (strain NBRC 101917 / NGR234)).